A 330-amino-acid chain; its full sequence is Ketol-acid reductoisomerase (NADP(+)) (330 aa).

The KARI N-terminal Rossmann domain occupies 2-182 (ARMYYDADAN…GGTRAGILET (181 aa)). Residues 25–28 (YGSQ), S51, S53, and 83–86 (DEFQ) contribute to the NADP(+) site. H108 is an active-site residue. G134 provides a ligand contact to NADP(+). The KARI C-terminal knotted domain occupies 183–328 (SFREETETDL…KDLRAMFSWL (146 aa)). Residues D191, E195, E227, and E231 each contribute to the Mg(2+) site. Residue S252 participates in substrate binding.

The protein belongs to the ketol-acid reductoisomerase family. Mg(2+) is required as a cofactor.

The catalysed reaction is (2R)-2,3-dihydroxy-3-methylbutanoate + NADP(+) = (2S)-2-acetolactate + NADPH + H(+). The enzyme catalyses (2R,3R)-2,3-dihydroxy-3-methylpentanoate + NADP(+) = (S)-2-ethyl-2-hydroxy-3-oxobutanoate + NADPH + H(+). The protein operates within amino-acid biosynthesis; L-isoleucine biosynthesis; L-isoleucine from 2-oxobutanoate: step 2/4. Its pathway is amino-acid biosynthesis; L-valine biosynthesis; L-valine from pyruvate: step 2/4. Functionally, involved in the biosynthesis of branched-chain amino acids (BCAA). Catalyzes an alkyl-migration followed by a ketol-acid reduction of (S)-2-acetolactate (S2AL) to yield (R)-2,3-dihydroxy-isovalerate. In the isomerase reaction, S2AL is rearranged via a Mg-dependent methyl migration to produce 3-hydroxy-3-methyl-2-ketobutyrate (HMKB). In the reductase reaction, this 2-ketoacid undergoes a metal-dependent reduction by NADPH to yield (R)-2,3-dihydroxy-isovalerate. The sequence is that of Ketol-acid reductoisomerase (NADP(+)) from Synechococcus elongatus (strain ATCC 33912 / PCC 7942 / FACHB-805) (Anacystis nidulans R2).